We begin with the raw amino-acid sequence, 150 residues long: Large ribosomal subunit protein bL9 (150 aa).

It belongs to the bacterial ribosomal protein bL9 family.

Binds to the 23S rRNA. The chain is Large ribosomal subunit protein bL9 from Leuconostoc mesenteroides subsp. mesenteroides (strain ATCC 8293 / DSM 20343 / BCRC 11652 / CCM 1803 / JCM 6124 / NCDO 523 / NBRC 100496 / NCIMB 8023 / NCTC 12954 / NRRL B-1118 / 37Y).